A 348-amino-acid polypeptide reads, in one-letter code: Major outer membrane protein (348 aa).

A signal peptide spans 1–20; that stretch reads MKKTIVALAVAAVAATSANA.

In terms of assembly, disulfide bond interactions within and between MOMP molecules and other components form high molecular-weight oligomers.

It localises to the cell outer membrane. Functionally, structural rigidity of the outer membrane of elementary bodies and porin forming, permitting diffusion of solutes through the intracellular reticulate body membrane. This chain is Major outer membrane protein (ompH), found in Pasteurella multocida (strain Pm70).